The chain runs to 318 residues: Elongation factor Ts, mitochondrial (318 aa).

The transit peptide at 1-18 (MLLQRFFTRALHSTRQLY) directs the protein to the mitochondrion.

Belongs to the EF-Ts family.

It is found in the mitochondrion. Its function is as follows. Associates with the EF-Tu.GDP complex and induces the exchange of GDP to GTP. It remains bound to the aminoacyl-tRNA.EF-Tu.GTP complex up to the GTP hydrolysis stage on the ribosome. The sequence is that of Elongation factor Ts, mitochondrial from Drosophila melanogaster (Fruit fly).